The following is a 430-amino-acid chain: tRNA(Ile)-lysidine synthase (430 aa).

Residue 27-32 coordinates ATP; sequence SGGSDS.

It belongs to the tRNA(Ile)-lysidine synthase family.

The protein localises to the cytoplasm. The enzyme catalyses cytidine(34) in tRNA(Ile2) + L-lysine + ATP = lysidine(34) in tRNA(Ile2) + AMP + diphosphate + H(+). Its function is as follows. Ligates lysine onto the cytidine present at position 34 of the AUA codon-specific tRNA(Ile) that contains the anticodon CAU, in an ATP-dependent manner. Cytidine is converted to lysidine, thus changing the amino acid specificity of the tRNA from methionine to isoleucine. The chain is tRNA(Ile)-lysidine synthase from Rickettsia bellii (strain RML369-C).